A 220-amino-acid polypeptide reads, in one-letter code: uncharacterized protein (220 aa).

This is an uncharacterized protein from Sinorhizobium fredii (strain NBRC 101917 / NGR234).